A 182-amino-acid polypeptide reads, in one-letter code: ATP synthase subunit delta (182 aa).

Belongs to the ATPase delta chain family. In terms of assembly, F-type ATPases have 2 components, F(1) - the catalytic core - and F(0) - the membrane proton channel. F(1) has five subunits: alpha(3), beta(3), gamma(1), delta(1), epsilon(1). F(0) has three main subunits: a(1), b(2) and c(10-14). The alpha and beta chains form an alternating ring which encloses part of the gamma chain. F(1) is attached to F(0) by a central stalk formed by the gamma and epsilon chains, while a peripheral stalk is formed by the delta and b chains.

Its subcellular location is the cell membrane. Its activity is regulated as follows. Increases 2-fold following exposure to low pH. F(1)F(0) ATP synthase produces ATP from ADP in the presence of a proton or sodium gradient. F-type ATPases consist of two structural domains, F(1) containing the extramembraneous catalytic core and F(0) containing the membrane proton channel, linked together by a central stalk and a peripheral stalk. During catalysis, ATP synthesis in the catalytic domain of F(1) is coupled via a rotary mechanism of the central stalk subunits to proton translocation. Its function is as follows. This protein is part of the stalk that links CF(0) to CF(1). It either transmits conformational changes from CF(0) to CF(1) or is implicated in proton conduction. This is ATP synthase subunit delta from Lactobacillus acidophilus (strain ATCC 700396 / NCK56 / N2 / NCFM).